Here is a 347-residue protein sequence, read N- to C-terminus: Quinolinate synthase (347 aa).

Iminosuccinate contacts are provided by His47 and Ser68. Cys113 is a [4Fe-4S] cluster binding site. Residues Tyr139–Asn141 and Ser156 each bind iminosuccinate. Cys200 provides a ligand contact to [4Fe-4S] cluster. Residues His226–Glu228 and Thr243 contribute to the iminosuccinate site. Cys297 serves as a coordination point for [4Fe-4S] cluster.

The protein belongs to the quinolinate synthase family. Type 1 subfamily. The cofactor is [4Fe-4S] cluster.

It localises to the cytoplasm. It carries out the reaction iminosuccinate + dihydroxyacetone phosphate = quinolinate + phosphate + 2 H2O + H(+). Its pathway is cofactor biosynthesis; NAD(+) biosynthesis; quinolinate from iminoaspartate: step 1/1. In terms of biological role, catalyzes the condensation of iminoaspartate with dihydroxyacetone phosphate to form quinolinate. In Salmonella choleraesuis (strain SC-B67), this protein is Quinolinate synthase.